Reading from the N-terminus, the 370-residue chain is uncharacterized protein (370 aa).

Lysine 207 is subject to N6-(pyridoxal phosphate)lysine.

The protein belongs to the class-V pyridoxal-phosphate-dependent aminotransferase family. Pyridoxal 5'-phosphate serves as cofactor.

This is an uncharacterized protein from Bacillus subtilis (strain 168).